A 227-amino-acid polypeptide reads, in one-letter code: PKHD-type hydroxylase Mnod_1077 (227 aa).

In terms of domain architecture, Fe2OG dioxygenase spans Arg-78–Ser-178. Residues His-96, Asp-98, and His-159 each coordinate Fe cation. Position 169 (Arg-169) interacts with 2-oxoglutarate.

Fe(2+) serves as cofactor. The cofactor is L-ascorbate.

In Methylobacterium nodulans (strain LMG 21967 / CNCM I-2342 / ORS 2060), this protein is PKHD-type hydroxylase Mnod_1077.